The chain runs to 212 residues: Glutathione S-transferase P 1 (212 aa).

One can recognise a GST N-terminal domain in the interval 2-83 (PGYVLTYFPV…YLGNKHGLTG (82 aa)). Residues Tyr8, Arg14, Trp39, Lys47, 54 to 55 (QL), and 67 to 68 (QS) contribute to the glutathione site. Residues 85 to 206 (NDEERGHIDM…KSDARNKRPI (122 aa)) enclose the GST C-terminal domain.

It belongs to the GST superfamily. Pi family. Homodimer. In terms of tissue distribution, expressed only in embryos. Not expressed in liver, lung, heart, kidney and ovary.

It localises to the cytoplasm. It is found in the mitochondrion. The protein resides in the nucleus. The enzyme catalyses RX + glutathione = an S-substituted glutathione + a halide anion + H(+). In terms of biological role, conjugation of reduced glutathione to a wide number of exogenous and endogenous hydrophobic electrophiles. Highly active towards 1-chloro-2,4-dinitrobenzene and organic isothiocyanates, but shows no detectable activity towards 1,2-dichloro-4-nitrobenzene, p-nitrobenzylchloride, trans-4-phenyl-3-buten-2-one (tPBO) and ethacrynic acid. May be associated with cellular proliferation. This chain is Glutathione S-transferase P 1 (gstp1), found in Xenopus laevis (African clawed frog).